We begin with the raw amino-acid sequence, 258 residues long: Transcription factor TT2 (258 aa).

HTH myb-type domains follow at residues 11–63 (REEL…KNYL) and 64–118 (RPGI…RKRL). DNA-binding regions (H-T-H motif) lie at residues 39-63 (WSTL…KNYL) and 91-114 (WSLI…NSNL). 47–54 (GLKRCGKS) provides a ligand contact to ATP.

In terms of assembly, interacts with BHLH2/EGL3/MYC146, BHLH12/MYC1 and BHLH42/TT8. As to expression, expressed at a high level in immature siliques and at a lower level in flowers. Undetected in young seedlings, roots, leaves and inflorescence stems.

It is found in the nucleus. Its function is as follows. Transcription activator, when associated with BHLH2/EGL3/MYC146, BHLH12/MYC1, or BHLH42/TT8. Involved in the control of flavonoid late metabolism in developing siliques. Plays a key role in determining the tissue-specific activation of leucoanthocyanidin reductase (BANYULS). The chain is Transcription factor TT2 (TT2) from Arabidopsis thaliana (Mouse-ear cress).